The primary structure comprises 306 residues: 1-aminocyclopropane-1-carboxylate oxidase (306 aa).

In terms of domain architecture, Fe2OG dioxygenase spans 153–253; that stretch reads PFFGTKVSHY…RRSIASFYNP (101 aa). Residues histidine 177, aspartate 179, and histidine 234 each coordinate Fe cation.

This sequence belongs to the iron/ascorbate-dependent oxidoreductase family. Requires Fe cation as cofactor.

The enzyme catalyses 1-aminocyclopropane-1-carboxylate + L-ascorbate + O2 = ethene + L-dehydroascorbate + hydrogen cyanide + CO2 + 2 H2O. It functions in the pathway alkene biosynthesis; ethylene biosynthesis via S-adenosyl-L-methionine; ethylene from S-adenosyl-L-methionine: step 2/2. This chain is 1-aminocyclopropane-1-carboxylate oxidase (MAO1B), found in Musa acuminata (Banana).